Consider the following 845-residue polypeptide: Protein translocase subunit SecA (845 aa).

Residues Gln-85, 103–107 (GEGKT), and Asp-492 contribute to the ATP site. A disordered region spans residues 787-845 (REQVAQGQAEHPETEQDAAAQSNTSAKRQPVRVDKKVGRNDLCPCGSGKKFKNCHGRNA). Residues Cys-829, Cys-831, Cys-840, and His-841 each coordinate Zn(2+). Positions 835-845 (KKFKNCHGRNA) are enriched in basic residues.

It belongs to the SecA family. Monomer and homodimer. Part of the essential Sec protein translocation apparatus which comprises SecA, SecYEG and auxiliary proteins SecDF. Other proteins may also be involved. The cofactor is Zn(2+).

The protein resides in the cell membrane. Its subcellular location is the cytoplasm. It carries out the reaction ATP + H2O + cellular proteinSide 1 = ADP + phosphate + cellular proteinSide 2.. Part of the Sec protein translocase complex. Interacts with the SecYEG preprotein conducting channel. Has a central role in coupling the hydrolysis of ATP to the transfer of proteins into and across the cell membrane, serving as an ATP-driven molecular motor driving the stepwise translocation of polypeptide chains across the membrane. This chain is Protein translocase subunit SecA, found in Enterococcus faecalis (strain ATCC 700802 / V583).